Here is a 552-residue protein sequence, read N- to C-terminus: Non-structural protein NS1 (552 aa).

The protein belongs to the orbivirus non-structural protein NS1 family.

In Antilocapra americana (Pronghorn), this protein is Non-structural protein NS1 (Segment-5).